The following is a 458-amino-acid chain: Siroheme synthase (458 aa).

Residues 1–203 (MDYLPLFFDL…GNLAAAEQLI (203 aa)) form a precorrin-2 dehydrogenase /sirohydrochlorin ferrochelatase region. Residues 22–23 (TI) and 43–44 (PK) each bind NAD(+). Ser128 carries the phosphoserine modification. Residues 216–458 (GEVYLVGAGP…RCHEKLNWYK (243 aa)) are uroporphyrinogen-III C-methyltransferase. Residue Pro225 participates in S-adenosyl-L-methionine binding. The active-site Proton acceptor is the Asp248. The active-site Proton donor is Lys270. Residues 301–303 (GGD), Ile306, 331–332 (TA), Met383, and Gly412 each bind S-adenosyl-L-methionine.

This sequence in the N-terminal section; belongs to the precorrin-2 dehydrogenase / sirohydrochlorin ferrochelatase family. It in the C-terminal section; belongs to the precorrin methyltransferase family.

The enzyme catalyses uroporphyrinogen III + 2 S-adenosyl-L-methionine = precorrin-2 + 2 S-adenosyl-L-homocysteine + H(+). It carries out the reaction precorrin-2 + NAD(+) = sirohydrochlorin + NADH + 2 H(+). The catalysed reaction is siroheme + 2 H(+) = sirohydrochlorin + Fe(2+). It functions in the pathway cofactor biosynthesis; adenosylcobalamin biosynthesis; precorrin-2 from uroporphyrinogen III: step 1/1. Its pathway is cofactor biosynthesis; adenosylcobalamin biosynthesis; sirohydrochlorin from precorrin-2: step 1/1. It participates in porphyrin-containing compound metabolism; siroheme biosynthesis; precorrin-2 from uroporphyrinogen III: step 1/1. The protein operates within porphyrin-containing compound metabolism; siroheme biosynthesis; siroheme from sirohydrochlorin: step 1/1. It functions in the pathway porphyrin-containing compound metabolism; siroheme biosynthesis; sirohydrochlorin from precorrin-2: step 1/1. Functionally, multifunctional enzyme that catalyzes the SAM-dependent methylations of uroporphyrinogen III at position C-2 and C-7 to form precorrin-2 via precorrin-1. Then it catalyzes the NAD-dependent ring dehydrogenation of precorrin-2 to yield sirohydrochlorin. Finally, it catalyzes the ferrochelation of sirohydrochlorin to yield siroheme. In Saccharophagus degradans (strain 2-40 / ATCC 43961 / DSM 17024), this protein is Siroheme synthase.